A 659-amino-acid chain; its full sequence is Putative pentatricopeptide repeat-containing protein At3g16890, mitochondrial (659 aa).

The N-terminal 32 residues, 1–32 (MRGFASSASRIATAAAASKSLNASTSVNPKLS), are a transit peptide targeting the mitochondrion. 15 PPR repeats span residues 109–143 (DQSL…GYRI), 144–178 (SDEL…GMKP), 179–213 (STRL…GCKP), 214–248 (DRFT…GNRP), 249–283 (NVFT…KLNP), 284–318 (NEAT…DSNL), 319–353 (QRVG…GYIP), 354–388 (DSST…GVKP), 389–423 (GFNG…GLLS), 424–458 (SVYS…GISP), 459–493 (NLVT…GFKP), 494–528 (DVIT…GIEP), 529–563 (NEIT…GLSP), 564–598 (DLYA…GLKP), and 599–633 (DNFT…GCVP).

This sequence belongs to the PPR family. P subfamily.

Its subcellular location is the mitochondrion. In terms of biological role, required for the ubiquinol-cytochrome c oxidoreductase activity of mitochondrial complex III. This chain is Putative pentatricopeptide repeat-containing protein At3g16890, mitochondrial (PPR40), found in Arabidopsis thaliana (Mouse-ear cress).